The following is a 215-amino-acid chain: Protein-L-isoaspartate O-methyltransferase (215 aa).

Residue S62 is part of the active site.

Belongs to the methyltransferase superfamily. L-isoaspartyl/D-aspartyl protein methyltransferase family.

The protein resides in the cytoplasm. It catalyses the reaction [protein]-L-isoaspartate + S-adenosyl-L-methionine = [protein]-L-isoaspartate alpha-methyl ester + S-adenosyl-L-homocysteine. Its function is as follows. Catalyzes the methyl esterification of L-isoaspartyl residues in peptides and proteins that result from spontaneous decomposition of normal L-aspartyl and L-asparaginyl residues. It plays a role in the repair and/or degradation of damaged proteins. This Bradyrhizobium sp. (strain BTAi1 / ATCC BAA-1182) protein is Protein-L-isoaspartate O-methyltransferase.